The primary structure comprises 252 residues: Phosphoribosylaminoimidazole-succinocarboxamide synthase 1 (252 aa).

This sequence belongs to the SAICAR synthetase family.

It catalyses the reaction 5-amino-1-(5-phospho-D-ribosyl)imidazole-4-carboxylate + L-aspartate + ATP = (2S)-2-[5-amino-1-(5-phospho-beta-D-ribosyl)imidazole-4-carboxamido]succinate + ADP + phosphate + 2 H(+). It participates in purine metabolism; IMP biosynthesis via de novo pathway; 5-amino-1-(5-phospho-D-ribosyl)imidazole-4-carboxamide from 5-amino-1-(5-phospho-D-ribosyl)imidazole-4-carboxylate: step 1/2. The polypeptide is Phosphoribosylaminoimidazole-succinocarboxamide synthase 1 (purC1) (Caulobacter vibrioides (strain ATCC 19089 / CIP 103742 / CB 15) (Caulobacter crescentus)).